We begin with the raw amino-acid sequence, 508 residues long: Phenylacetaldehyde synthase (508 aa).

Residues histidine 203 and histidine 318 each contribute to the L-phenylalanine site. Residue lysine 319 is modified to N6-(pyridoxal phosphate)lysine. Phenylalanine 348 lines the L-phenylalanine pocket.

Belongs to the group II decarboxylase family. In terms of assembly, homotetramer. The cofactor is pyridoxal 5'-phosphate.

The enzyme catalyses L-phenylalanine + O2 + H2O + H(+) = 2-phenylacetaldehyde + H2O2 + NH4(+) + CO2. Functionally, bifunctional enzyme that catalyzes the decarboxylation of L-phenylalanine to produce 2-phenylethylamine, which is then oxidized to form 2-phenylacetaldehyde, a constituent of floral scent in petals. 2-phenylacetaldehyde is a precursor of 2-phenylethanol, another constituent of floral scent in petals. This is Phenylacetaldehyde synthase from Rosa hybrid cultivar.